The chain runs to 430 residues: Putative chloroquine resistance transporter (430 aa).

Residues 1-22 are disordered; it reads MLKEGSSLDLSASSSSGTLRSD. The Cytoplasmic portion of the chain corresponds to 1–53; that stretch reads MLKEGSSLDLSASSSSGTLRSDNSFGNSPLDRITSLLILIYKSIRACFKWIYS. The span at 7-21 shows a compositional bias: low complexity; that stretch reads SLDLSASSSSGTLRS. Residues 54–74 traverse the membrane as a helical segment; it reads KSFGIICILFVILDVLTTVFF. The Vacuolar portion of the chain corresponds to 75 to 88; that stretch reads KRFIDHTKNYVMFT. Residues 89-109 traverse the membrane as a helical segment; that stretch reads IQVIIFTFWIIVCCIAILCFL. The Cytoplasmic portion of the chain corresponds to 110–122; the sequence is FNREYMKRHFNVR. The chain crosses the membrane as a helical span at residues 123–143; sequence PLVFLGFLDMLSTGLSANGSA. Topologically, residues 144-147 are vacuolar; that stretch reads HTSG. Residues 148–168 traverse the membrane as a helical segment; the sequence is LMLVLLGQISVPLTMVSCKLI. The Cytoplasmic portion of the chain corresponds to 169 to 173; that stretch reads LSKKY. The chain crosses the membrane as a helical span at residues 174–194; the sequence is HHYQYISSAIILTFAVLKPIL. Asn195 is a glycosylation site (N-linked (GlcNAc...) asparagine). Topologically, residues 195-206 are vacuolar; the sequence is NRTDTTDNRFYN. A helical transmembrane segment spans residues 207–223; that stretch reads NMLYLLASVPDSIASAL. The Cytoplasmic portion of the chain corresponds to 224 to 239; the sequence is REKQYTSKFFHVVKYQ. A helical membrane pass occupies residues 240–260; it reads FFGFLFHFFYNILYTLLFTLP. Over 261-306 the chain is Vacuolar; it reads FNSVKGYFDSLYKLCVNGYKCIFFGVNTITENCGPTLIPTCDNCLE. 2 cysteine pairs are disulfide-bonded: Cys281–Cys304 and Cys293–Cys301. The chain crosses the membrane as a helical span at residues 307-329; sequence AFKIYCLYILFSSAIRVAYVFIM. The Cytoplasmic portion of the chain corresponds to 330-335; that stretch reads LDGSVT. Residues 336 to 358 form a helical membrane-spanning segment; sequence FTLLLGTVKVPLTSIAFSLRFIA. Over 359–364 the chain is Vacuolar; it reads GDSTTS. The helical transmembrane segment at 365 to 385 threads the bilayer; that stretch reads FNLLDVVCFLGIVAGLLLYAL. Over 386-430 the chain is Cytoplasmic; sequence GSKKIQEETDLLESPLIDDAESEHELLSTGTEKLMRSEICHDLFT.

The protein belongs to the CRT-like transporter family.

It is found in the vacuole membrane. Nutrient transporter. Involved in maintaining the osmotic homeostasis of the digestive vacuole. The chain is Putative chloroquine resistance transporter from Theileria annulata.